The primary structure comprises 173 residues: RNA silencing suppressor p19 (173 aa).

The span at 1-21 (MERAIQRSDAREQANSERWDG) shows a compositional bias: basic and acidic residues. The interval 1 to 34 (MERAIQRSDAREQANSERWDGRCGGTITPFKLPD) is disordered.

This sequence belongs to the tombusvirus protein p19 family. In terms of assembly, homodimer.

Its function is as follows. Viral suppressor of RNA silencing which binds specifically to silencing RNAs (siRNAs). Acts as a molecular caliper to specifically select siRNAs based on the length of the duplex region of the RNA. This Cucumis sativus (Cucumber) protein is RNA silencing suppressor p19.